A 382-amino-acid chain; its full sequence is Proton extrusion protein PxcA (382 aa).

A run of 4 helical transmembrane segments spans residues 156 to 176, 257 to 277, 305 to 325, and 340 to 360; these read TLISLKIILLLILVPLLVQQI, AIKNVLADLAALIAFAFVCII, IILFTDMFVGFHSPEGWQVLL, and FILLFIATFPVILATIFKYWI.

It belongs to the CemA family.

It is found in the cell inner membrane. Required for H(+) efflux immediately after light irradiation to form a rapid H(+) concentration gradient across the thylakoid membranes. Together with PxcL, contributes to transient H(+) uptake following dark to light transition. This Prochlorococcus marinus (strain MIT 9313) protein is Proton extrusion protein PxcA.